Reading from the N-terminus, the 205-residue chain is Guanylate kinase (205 aa).

Residues 7–185 (GNIFIISAAS…AEEDLRHIVN (179 aa)) enclose the Guanylate kinase-like domain. 14–21 (AASGTGKT) is a binding site for ATP.

This sequence belongs to the guanylate kinase family.

The protein resides in the cytoplasm. The enzyme catalyses GMP + ATP = GDP + ADP. In terms of biological role, essential for recycling GMP and indirectly, cGMP. The sequence is that of Guanylate kinase (gmk) from Neisseria meningitidis serogroup B (strain ATCC BAA-335 / MC58).